Reading from the N-terminus, the 156-residue chain is Zinc metalloproteinase-disintegrin jararin (156 aa).

The Peptidase M12B domain occupies 1-67 (FVANRMAHEL…NYYGCLLNEP (67 aa)). His-8 is a Zn(2+) binding site. Glu-9 is an active-site residue. Zn(2+) is bound at residue His-12. 9 cysteine pairs are disulfide-bonded: Cys-23–Cys-47, Cys-25–Cys-30, Cys-78–Cys-97, Cys-89–Cys-107, Cys-91–Cys-102, Cys-101–Cys-124, Cys-115–Cys-121, Cys-120–Cys-145, and Cys-133–Cys-152. The 82-residue stretch at 75–156 (PPFCGNYYPE…GQSGDCPRNS (82 aa)) folds into the Disintegrin domain. The span at 136–145 (GRGDNPDDRC) shows a compositional bias: basic and acidic residues. Residues 136 to 156 (GRGDNPDDRCTGQSGDCPRNS) are disordered. The Cell attachment site motif lies at 137 to 139 (RGD). Residues 146–156 (TGQSGDCPRNS) are compositionally biased toward polar residues.

It belongs to the venom metalloproteinase (M12B) family. P-II subfamily. P-IIb sub-subfamily. As to quaternary structure, monomer. It depends on Zn(2+) as a cofactor. In terms of tissue distribution, expressed by the venom gland.

The protein resides in the secreted. Snake venom zinc metalloproteinase that inhibits ADP-induced platelet aggregation (probably by binding integrin alpha-IIb/beta-3 (ITGA2B/ITGB3)) and degrades fibrinogen. This chain is Zinc metalloproteinase-disintegrin jararin, found in Bothrops jararaca (Jararaca).